The sequence spans 1447 residues: Sister chromatid cohesion protein PDS5 homolog B (1447 aa).

An HEAT repeat occupies 383-419 (LLVNDHLLNFVRERTLDKRWRVRKEAMMGLAQIYKKY). Residue Lys1136 is modified to N6-acetyllysine. Over residues 1137–1155 (PLSSAGKQSQTKSSRMETV) the composition is skewed to polar residues. The interval 1137-1447 (PLSSAGKQSQ…RRRSSKRERR (311 aa)) is disordered. A phosphoserine mark is found at Ser1140, Ser1162, Ser1166, Ser1176, Ser1182, and Ser1191. Residues 1156–1167 (SNASSSSNPSSP) are compositionally biased toward low complexity. Residues 1172-1184 (GRLDSTEMDHSEN) show a composition bias toward basic and acidic residues. Over residues 1196-1214 (KKSDKREDSDLVRSELEKP) the composition is skewed to basic and acidic residues. Ser1221 carries the phosphoserine modification. Over residues 1225 to 1243 (PEEKLGMDDLSKLVQEQKP) the composition is skewed to basic and acidic residues. A compositionally biased stretch (basic residues) spans 1245–1254 (GSQRGRKRGH). Residues 1247–1259 (QRGRKRGHAASES) constitute a DNA-binding region (a.T hook 1). Phosphoserine occurs at positions 1257 and 1259. Residues 1265-1274 (PEEKRHKEEL) are compositionally biased toward basic and acidic residues. A Phosphoserine modification is found at Ser1283. The a.T hook 2 DNA-binding region spans 1287–1299 (KGKRGRPPKPLGG). Composition is skewed to basic residues over residues 1309–1318 (TSKKGNKKKP) and 1341–1352 (KSKQQRTSKRAQ). Residues Ser1357 and Ser1365 each carry the phosphoserine modification. Residues 1358 to 1371 (PETSAVESTQSTPQ) show a composition bias toward polar residues. Residue Thr1366 is modified to Phosphothreonine. Phosphoserine is present on Ser1368. Residues Thr1369 and Thr1380 each carry the phosphothreonine modification. Residues 1371-1383 (QKGRGRPSKTPSP) constitute a DNA-binding region (a.T hook 3). Positions 1378–1387 (SKTPSPSQPK) are enriched in low complexity. A phosphoserine mark is found at Ser1382, Ser1416, and Ser1419. Residues 1422–1432 (TTQEGAEEEDI) show a composition bias toward acidic residues. Basic residues predominate over residues 1437 to 1447 (VRRRSSKRERR).

This sequence belongs to the PDS5 family. As to quaternary structure, interacts with the cohesin complex. Interacts with RAD21; the interaction is direct. Interacts with WAPL (via FGF motifs) or CDCA5 (via the FGF motif); the interaction is direct, cohesin-dependent and competitive. In terms of tissue distribution, highly expressed in intact prostate with levels decreasing after castration. Expressed exclusively in prostate cells inhibited from proliferating by long-term androgen exposure.

The protein localises to the nucleus. Functionally, regulator of sister chromatid cohesion in mitosis which may stabilize cohesin complex association with chromatin. May couple sister chromatid cohesion during mitosis to DNA replication. Cohesion ensures that chromosome partitioning is accurate in both meiotic and mitotic cells and plays an important role in DNA repair. Plays a role in androgen-induced proliferative arrest in prostate cells. The sequence is that of Sister chromatid cohesion protein PDS5 homolog B (Pds5b) from Rattus norvegicus (Rat).